A 656-amino-acid polypeptide reads, in one-letter code: MIKSQKEYLERIAYLNTLSHHYYNLDDPIVSDAVYDELYQELKAYEEKNPSHIQANSPTQKVGATATNPFNKNPHLMRMWSLDDVFNQSELQAWLQRILKAYPSASFVCSPKLDGVSLNLLYHHGKLISATTRGNGLEGELVSANAKHIANIPHAIAYKGEIEIRGEVIISKKDFDALNKERLNANEPLFANPRNAASGSLRQLDSEITKKRKLQFIPWGVGKHSLNFLSFKECLDFIVSLGFSAIQYLSLNKNHQEIEENYHTLIREREGFFALLDGMVIVVNELNIQKELGYTQKSPKFACAYKFPALEKHTKIIGVINQVGRSGAITPVALLEPVEIAGAMINRATLHNYSEIEKKNIMLNDRVVVIRSGDVIPKIIKPLESYRDGSQHKIERPKVCPICSYELLCEEIFTYCQNLNCPARLKESLIHFASKDALNIQGLGDKVIEQLFEEKLIVNALDLYALKLEDLMRLDKFKIKKAQNLLDAIQKSKNPPLWRLINALGIEHIGKGASKTLAKYGLNVLEKSEAEFLEMEGFGVEMARSLVNFYASNQEFIRSLFELLNPRNSDMAEEKQKSSSVFNNKTIVLTGTLSKPRQEYAQMLENLGAKISSSVSAKTNFLIVGENAGSKLALAQKHGVSVLNEEELLKRLKELD.

Residues 32–36 and 81–82 each bind NAD(+); these read DAVYD and SL. Lys112 functions as the N6-AMP-lysine intermediate in the catalytic mechanism. Positions 133, 167, and 306 each coordinate NAD(+). Positions 400, 403, 416, and 421 each coordinate Zn(2+). Residues 577–656 enclose the BRCT domain; sequence KSSSVFNNKT…ELLKRLKELD (80 aa).

Belongs to the NAD-dependent DNA ligase family. LigA subfamily. Mg(2+) serves as cofactor. Requires Mn(2+) as cofactor.

The enzyme catalyses NAD(+) + (deoxyribonucleotide)n-3'-hydroxyl + 5'-phospho-(deoxyribonucleotide)m = (deoxyribonucleotide)n+m + AMP + beta-nicotinamide D-nucleotide.. Functionally, DNA ligase that catalyzes the formation of phosphodiester linkages between 5'-phosphoryl and 3'-hydroxyl groups in double-stranded DNA using NAD as a coenzyme and as the energy source for the reaction. It is essential for DNA replication and repair of damaged DNA. The polypeptide is DNA ligase (Helicobacter pylori (strain HPAG1)).